The primary structure comprises 2293 residues: Protein Ycf2 (2293 aa).

Residue 1642–1649 participates in ATP binding; that stretch reads GSIGTGRS.

The protein belongs to the Ycf2 family.

The protein localises to the plastid. Its subcellular location is the chloroplast stroma. In terms of biological role, probable ATPase of unknown function. Its presence in a non-photosynthetic plant (Epifagus virginiana) and experiments in tobacco indicate that it has an essential function which is probably not related to photosynthesis. The protein is Protein Ycf2 of Platanus occidentalis (Sycamore).